Here is a 121-residue protein sequence, read N- to C-terminus: Cytochrome B5-like protein (121 aa).

A helical transmembrane segment spans residues 1–21 (MIAVIGLLLGFLVSALFLIQG). Positions 24-49 (RRTNDNQEKKRSSSEPVEDVVRPKSY) are disordered. Basic and acidic residues predominate over residues 26-36 (TNDNQEKKRSS). One can recognise a Cytochrome b5 heme-binding domain in the interval 46-121 (PKSYSKSEVA…IEDFYIGELH (76 aa)). Positions 81 and 104 each coordinate heme.

Belongs to the cytochrome b5 family.

It is found in the membrane. This Arabidopsis thaliana (Mouse-ear cress) protein is Cytochrome B5-like protein.